The chain runs to 242 residues: Protein HTATIP2 (242 aa).

Residue A2 is modified to N-acetylalanine. The interval 2 to 25 (AETEALSKLREDFRMQNKSVFILG) is required for interaction with elongation factor EEF1A1. The NADPH site is built by S27, G28, E29, T30, R52, R53, L92, G93, Y143, K147, L170, and R178. The active-site Proton acceptor is the Y143. The active site involves K147.

In terms of assembly, monomer. Forms homodimers during oxidative stress. Interacts (via N-terminus) with elongation factor EEF1A1 (via middle-region); the interaction is direct and competes with EEF1A1 binding to guanyl-nucleotide exchange factor EEF1B2, thereby inhibiting GDP for GTP exchange and reactivation of EEF1A1. Interacts with nuclear transport receptors XPO4, IPO5/RANBP5, IPO7, IPO9 and KPNB1 as well as GCN1L1/GCN1 and LRPPRC probably through their HEAT repeats. Binds NCOA5/CIA. As to quaternary structure, interacts (via N-terminus) with proteasome subunit PSMD4/s5a. (Microbial infection) Interacts with HIV-1 Tat (via activation domain). High levels in liver, lung, skeletal muscle, pancreas and placenta. Moderate levels in heart and kidney. Low levels in brain. Not expressed or low levels in variant small cell lung carcinomas, 33% of hepatocellular carcinomas and neuroblastomas. Levels are reduced in the heart of patients with hypertrophic cardiomyopathy and failing hearts.

Its subcellular location is the cytoplasm. In terms of biological role, represses translation by preventing reactivation of elongation factor eEF1A. May also inhibit nuclear import by competing with nuclear import substrates for binding to a subset of nuclear transport receptors. Has additionally been proposed to act as a redox sensor involved in cellular oxidative stress surveillance. In Homo sapiens (Human), this protein is Protein HTATIP2.